A 193-amino-acid polypeptide reads, in one-letter code: Ribosome hibernation promotion factor (193 aa).

The protein belongs to the HPF/YfiA ribosome-associated protein family. Long HPF subfamily. In terms of assembly, interacts with 100S ribosomes.

Its subcellular location is the cytoplasm. Its function is as follows. Might modulate either transcription and/or translation. Required for dimerization of active 70S ribosomes into 100S ribosomes in stationary phase; 100S ribosomes are translationally inactive and sometimes present during exponential growth. In Picosynechococcus sp. (strain ATCC 27264 / PCC 7002 / PR-6) (Agmenellum quadruplicatum), this protein is Ribosome hibernation promotion factor.